We begin with the raw amino-acid sequence, 1960 residues long: Myosin-9 (1960 aa).

Alanine 2 is subject to N-acetylalanine. The mediates interaction with LIMCH1 stretch occupies residues 2-838 (AQQAADKYLY…RLFTKVKPLL (837 aa)). An N6-acetyllysine modification is found at lysine 8. Tyrosine 11 bears the Phosphotyrosine mark. The Myosin N-terminal SH3-like domain maps to 27–77 (AAKKLVWVPSDKSGFEPASLKEEVGEEAIVELVENGKKVKVNKDDIQKMNP). In terms of domain architecture, Myosin motor spans 81–776 (SKVEDMAELT…VLAHLEEERD (696 aa)). Position 102 is an N6-acetyllysine (lysine 102). 174-181 (GESGAGKT) is an ATP binding site. Residues lysine 299, lysine 435, and lysine 613 each carry the N6-acetyllysine modification. Residue serine 628 is modified to Phosphoserine. The interval 654 to 676 (LAKLMATLRNTNPNFVRCIIPNH) is actin-binding. Tyrosine 754 carries the phosphotyrosine modification. The IQ domain occupies 779–808 (ITDVIIGFQACCRGYLARKAFAKRQQQLTA). The stretch at 837–1926 (LLQVSRQEEE…LKNKLRRGDL (1090 aa)) forms a coiled coil. Position 850 is an N6-succinyllysine (lysine 850). Residues lysine 860, lysine 975, and lysine 1024 each carry the N6-acetyllysine modification. The residue at position 1114 (serine 1114) is a Phosphoserine. The segment at 1117 to 1137 (QEDLESERASRNKAEKQKRDL) is disordered. Over residues 1122-1137 (SERASRNKAEKQKRDL) the composition is skewed to basic and acidic residues. 8 positions are modified to N6-acetyllysine: lysine 1234, lysine 1249, lysine 1357, lysine 1392, lysine 1404, lysine 1410, lysine 1459, and lysine 1638. Position 1669 is an N6-succinyllysine (lysine 1669). At serine 1714 the chain carries Phosphoserine. Lysine 1793, lysine 1802, and lysine 1845 each carry N6-acetyllysine. The tract at residues 1877–1918 (RQLEEAEEEAQRANASRRKLQRELEDATETADAMNREVSSLK) is disordered. Arginine 1923 carries the omega-N-methylarginine modification. The interval 1934 to 1960 (VARKGAGDCSDEEVDGKADGAEAKAAE) is disordered. Serine 1943 carries the phosphoserine modification. Basic and acidic residues predominate over residues 1948 to 1960 (DGKADGAEAKAAE).

Belongs to the TRAFAC class myosin-kinesin ATPase superfamily. Myosin family. Myosin is a hexameric protein that consists of 2 heavy chain subunits (MHC), 2 alkali light chain subunits (MLC) and 2 regulatory light chain subunits (MLC-2). Interacts with RASIP1. Interacts with DDR1. Interacts with PDLIM2. Interacts with SVIL. Interacts with HTRA3. Interacts with Myo7a. Interacts with CFAP95. Interacts with LIMCH1; independently of the integration of MYH9 into the myosin complex. Interacts with RAB3A. Interacts with ZBED4. Interacts with S100A4; this interaction increases cell motility. In terms of processing, ISGylated. Ubiquitination.

The protein localises to the cytoplasm. It localises to the cytoskeleton. Its subcellular location is the cell cortex. It is found in the cytoplasmic vesicle. The protein resides in the secretory vesicle. The protein localises to the cortical granule. Cellular myosin that appears to play a role in cytokinesis, cell shape, and specialized functions such as secretion and capping. Required for cortical actin clearance prior to oocyte exocytosis. Promotes cell motility in conjunction with S100A4. During cell spreading, plays an important role in cytoskeleton reorganization, focal contact formation (in the margins but not the central part of spreading cells), and lamellipodial retraction; this function is mechanically antagonized by MYH10. This Canis lupus familiaris (Dog) protein is Myosin-9 (MYH9).